Reading from the N-terminus, the 324-residue chain is MTKSETTLSKLLVESELVQECEELLSSLPRDRSVFAEYLYQYQGFWYPPNLLEGVLYSQKHFQARDSDIVLASIPKSGTTWLKSLVFALIHRQEFQTPLVSHPLLDNNPHTLVTFIEGFHLHTQDTSPRIFSTHIPVGSLPESVKDSSCKVVYCCRNPKDAFVSLWHFMKNLIVKEMVGCTMEEMVRFFCRGSSIYGPFWDHVLQYWKESRENPKKVMFVMYEEMREQPQEWVMRIAEFLGYSFTEEEIENGVLEDIIKLCSLENLSKLEVNEKGKLLNGMETKAFFRKGEIGGWRDTLTPLLAEEIDKTTKEKLIGSDFRFFC.

Residue 76-81 (KSGTTW) coordinates 3'-phosphoadenylyl sulfate. H134 serves as the catalytic Proton acceptor. 3'-phosphoadenylyl sulfate is bound by residues R156, S164, Y222, and 288 to 290 (RKG).

The protein belongs to the sulfotransferase 1 family.

Its subcellular location is the cytoplasm. Its function is as follows. Sulfotransferase that utilizes 3'-phospho-5'-adenylyl sulfate (PAPS) as sulfonate donor. The protein is Cytosolic sulfotransferase 13 (SOT13) of Arabidopsis thaliana (Mouse-ear cress).